We begin with the raw amino-acid sequence, 505 residues long: Probable glycine dehydrogenase (decarboxylating) subunit 2 (505 aa).

Lys274 carries the N6-(pyridoxal phosphate)lysine modification.

Belongs to the GcvP family. C-terminal subunit subfamily. In terms of assembly, the glycine cleavage system is composed of four proteins: P, T, L and H. In this organism, the P 'protein' is a heterodimer of two subunits. Pyridoxal 5'-phosphate serves as cofactor.

It carries out the reaction N(6)-[(R)-lipoyl]-L-lysyl-[glycine-cleavage complex H protein] + glycine + H(+) = N(6)-[(R)-S(8)-aminomethyldihydrolipoyl]-L-lysyl-[glycine-cleavage complex H protein] + CO2. Functionally, the glycine cleavage system catalyzes the degradation of glycine. The P protein binds the alpha-amino group of glycine through its pyridoxal phosphate cofactor; CO(2) is released and the remaining methylamine moiety is then transferred to the lipoamide cofactor of the H protein. The polypeptide is Probable glycine dehydrogenase (decarboxylating) subunit 2 (Sulfurisphaera tokodaii (strain DSM 16993 / JCM 10545 / NBRC 100140 / 7) (Sulfolobus tokodaii)).